A 217-amino-acid polypeptide reads, in one-letter code: Imidazole glycerol phosphate synthase subunit HisH (217 aa).

The Glutamine amidotransferase type-1 domain maps to 3 to 217 (TIAIVDYGVG…LYRNFVHWNP (215 aa)). Residue Cys-82 is the Nucleophile of the active site. Catalysis depends on residues His-197 and Glu-199.

Heterodimer of HisH and HisF.

The protein resides in the cytoplasm. The catalysed reaction is 5-[(5-phospho-1-deoxy-D-ribulos-1-ylimino)methylamino]-1-(5-phospho-beta-D-ribosyl)imidazole-4-carboxamide + L-glutamine = D-erythro-1-(imidazol-4-yl)glycerol 3-phosphate + 5-amino-1-(5-phospho-beta-D-ribosyl)imidazole-4-carboxamide + L-glutamate + H(+). The enzyme catalyses L-glutamine + H2O = L-glutamate + NH4(+). The protein operates within amino-acid biosynthesis; L-histidine biosynthesis; L-histidine from 5-phospho-alpha-D-ribose 1-diphosphate: step 5/9. In terms of biological role, IGPS catalyzes the conversion of PRFAR and glutamine to IGP, AICAR and glutamate. The HisH subunit catalyzes the hydrolysis of glutamine to glutamate and ammonia as part of the synthesis of IGP and AICAR. The resulting ammonia molecule is channeled to the active site of HisF. This is Imidazole glycerol phosphate synthase subunit HisH from Cupriavidus pinatubonensis (strain JMP 134 / LMG 1197) (Cupriavidus necator (strain JMP 134)).